A 238-amino-acid chain; its full sequence is Adapter protein MecA (238 aa).

Residues 108–133 (EDENEESVQGNQQQRRSHASDHSKRA) form a disordered region.

It belongs to the MecA family. In terms of assembly, homodimer.

Its function is as follows. Enables the recognition and targeting of unfolded and aggregated proteins to the ClpC protease or to other proteins involved in proteolysis. The chain is Adapter protein MecA from Staphylococcus carnosus (strain TM300).